The primary structure comprises 136 residues: Large ribosomal subunit protein uL16 (136 aa).

Belongs to the universal ribosomal protein uL16 family. As to quaternary structure, part of the 50S ribosomal subunit.

Functionally, binds 23S rRNA and is also seen to make contacts with the A and possibly P site tRNAs. The polypeptide is Large ribosomal subunit protein uL16 (Shewanella sediminis (strain HAW-EB3)).